The primary structure comprises 230 residues: Orotidine 5'-phosphate decarboxylase (230 aa).

Substrate is bound by residues Asp11, Lys34, 61 to 70 (DLKLHDIPNT), Thr117, Arg179, Gln188, Gly208, and Arg209. The Proton donor role is filled by Lys63.

The protein belongs to the OMP decarboxylase family. Type 1 subfamily. As to quaternary structure, homodimer.

It catalyses the reaction orotidine 5'-phosphate + H(+) = UMP + CO2. It participates in pyrimidine metabolism; UMP biosynthesis via de novo pathway; UMP from orotate: step 2/2. In terms of biological role, catalyzes the decarboxylation of orotidine 5'-monophosphate (OMP) to uridine 5'-monophosphate (UMP). In Streptococcus gordonii (strain Challis / ATCC 35105 / BCRC 15272 / CH1 / DL1 / V288), this protein is Orotidine 5'-phosphate decarboxylase.